The sequence spans 532 residues: SET and MYND domain-containing protein DDB_G0288495 (532 aa).

An SET domain is found at 25–448; sequence PWIEVKSVSE…ENQELLITYI (424 aa). Residues 70 to 116 form an MYND-type; degenerate zinc finger; it reads CTTCFKILLESNRHNFQTCPSCFQVNYCSNYCKQYSKIETKHTELEC. Positions 199–240 form a coiled coil; the sequence is INSKNNNEFENEEEEEEEQEQKGEGEQEENENNENNEKVKKK. The tract at residues 204–234 is disordered; that stretch reads NNEFENEEEEEEEQEQKGEGEQEENENNENN. The span at 207–217 shows a compositional bias: acidic residues; that stretch reads FENEEEEEEEQ.

The protein belongs to the class V-like SAM-binding methyltransferase superfamily.

In terms of biological role, probable methyltransferase. This Dictyostelium discoideum (Social amoeba) protein is SET and MYND domain-containing protein DDB_G0288495.